Consider the following 91-residue polypeptide: CRISPR-associated endoribonuclease Cas2 2 (91 aa).

Mg(2+) is bound at residue Asp8.

It belongs to the CRISPR-associated endoribonuclease Cas2 protein family. As to quaternary structure, homodimer, forms a heterotetramer with a Cas1 homodimer. The cofactor is Mg(2+).

Functionally, CRISPR (clustered regularly interspaced short palindromic repeat), is an adaptive immune system that provides protection against mobile genetic elements (viruses, transposable elements and conjugative plasmids). CRISPR clusters contain sequences complementary to antecedent mobile elements and target invading nucleic acids. CRISPR clusters are transcribed and processed into CRISPR RNA (crRNA). Functions as a ssRNA-specific endoribonuclease. Involved in the integration of spacer DNA into the CRISPR cassette. The polypeptide is CRISPR-associated endoribonuclease Cas2 2 (Pyrobaculum aerophilum (strain ATCC 51768 / DSM 7523 / JCM 9630 / CIP 104966 / NBRC 100827 / IM2)).